We begin with the raw amino-acid sequence, 134 residues long: Phosphoribosyl-AMP cyclohydrolase (134 aa).

D77 is a binding site for Mg(2+). Zn(2+) is bound at residue C78. The Mg(2+) site is built by D79 and D81. Residues C95 and C102 each contribute to the Zn(2+) site.

It belongs to the PRA-CH family. In terms of assembly, homodimer. Mg(2+) is required as a cofactor. Requires Zn(2+) as cofactor.

The protein resides in the cytoplasm. It catalyses the reaction 1-(5-phospho-beta-D-ribosyl)-5'-AMP + H2O = 1-(5-phospho-beta-D-ribosyl)-5-[(5-phospho-beta-D-ribosylamino)methylideneamino]imidazole-4-carboxamide. The protein operates within amino-acid biosynthesis; L-histidine biosynthesis; L-histidine from 5-phospho-alpha-D-ribose 1-diphosphate: step 3/9. Its function is as follows. Catalyzes the hydrolysis of the adenine ring of phosphoribosyl-AMP. This Pseudomonas aeruginosa (strain LESB58) protein is Phosphoribosyl-AMP cyclohydrolase.